Here is a 405-residue protein sequence, read N- to C-terminus: Tryptophan synthase beta chain (405 aa).

N6-(pyridoxal phosphate)lysine is present on Lys98.

Belongs to the TrpB family. Tetramer of two alpha and two beta chains. Pyridoxal 5'-phosphate serves as cofactor.

It catalyses the reaction (1S,2R)-1-C-(indol-3-yl)glycerol 3-phosphate + L-serine = D-glyceraldehyde 3-phosphate + L-tryptophan + H2O. The protein operates within amino-acid biosynthesis; L-tryptophan biosynthesis; L-tryptophan from chorismate: step 5/5. Its function is as follows. The beta subunit is responsible for the synthesis of L-tryptophan from indole and L-serine. The protein is Tryptophan synthase beta chain of Xylella fastidiosa (strain M23).